The primary structure comprises 318 residues: Na(+)-translocating NADH-quinone reductase subunit C (318 aa).

The chain crosses the membrane as a helical span at residues 13-33; the sequence is WYIILFIFVLSLVAGTLLSSV. Residue Thr-281 is modified to FMN phosphoryl threonine.

This sequence belongs to the NqrC family. As to quaternary structure, composed of six subunits; NqrA, NqrB, NqrC, NqrD, NqrE and NqrF. FMN serves as cofactor.

It is found in the cell inner membrane. The enzyme catalyses a ubiquinone + n Na(+)(in) + NADH + H(+) = a ubiquinol + n Na(+)(out) + NAD(+). In terms of biological role, NQR complex catalyzes the reduction of ubiquinone-1 to ubiquinol by two successive reactions, coupled with the transport of Na(+) ions from the cytoplasm to the periplasm. NqrA to NqrE are probably involved in the second step, the conversion of ubisemiquinone to ubiquinol. This is Na(+)-translocating NADH-quinone reductase subunit C from Chlamydia muridarum (strain MoPn / Nigg).